A 284-amino-acid polypeptide reads, in one-letter code: ATP phosphoribosyltransferase (284 aa).

This sequence belongs to the ATP phosphoribosyltransferase family. Long subfamily. Requires Mg(2+) as cofactor.

Its subcellular location is the cytoplasm. The enzyme catalyses 1-(5-phospho-beta-D-ribosyl)-ATP + diphosphate = 5-phospho-alpha-D-ribose 1-diphosphate + ATP. The protein operates within amino-acid biosynthesis; L-histidine biosynthesis; L-histidine from 5-phospho-alpha-D-ribose 1-diphosphate: step 1/9. With respect to regulation, feedback inhibited by histidine. In terms of biological role, catalyzes the condensation of ATP and 5-phosphoribose 1-diphosphate to form N'-(5'-phosphoribosyl)-ATP (PR-ATP). Has a crucial role in the pathway because the rate of histidine biosynthesis seems to be controlled primarily by regulation of HisG enzymatic activity. The polypeptide is ATP phosphoribosyltransferase (Pseudarthrobacter chlorophenolicus (strain ATCC 700700 / DSM 12829 / CIP 107037 / JCM 12360 / KCTC 9906 / NCIMB 13794 / A6) (Arthrobacter chlorophenolicus)).